Here is a 312-residue protein sequence, read N- to C-terminus: Coiled-coil domain-containing protein 160 homolog (312 aa).

Residues 126–281 (SEGAKFKNQL…EERKREKTHS (156 aa)) adopt a coiled-coil conformation.

Belongs to the CCDC160 family.

In Xenopus tropicalis (Western clawed frog), this protein is Coiled-coil domain-containing protein 160 homolog.